The sequence spans 394 residues: Phosphoglycerate kinase (394 aa).

Substrate contacts are provided by residues 21–23, Arg36, 59–62, Arg118, and Arg151; these read DFN and HLGR. Ser183 bears the Phosphoserine mark. ATP contacts are provided by Lys201 and Gly292. The residue at position 299 (Thr299) is a Phosphothreonine. Residues Glu323 and 350–353 each bind ATP; that span reads GGDS.

This sequence belongs to the phosphoglycerate kinase family. Monomer.

Its subcellular location is the cytoplasm. It catalyses the reaction (2R)-3-phosphoglycerate + ATP = (2R)-3-phospho-glyceroyl phosphate + ADP. It functions in the pathway carbohydrate degradation; glycolysis; pyruvate from D-glyceraldehyde 3-phosphate: step 2/5. The sequence is that of Phosphoglycerate kinase from Bacillus thuringiensis subsp. konkukian (strain 97-27).